The primary structure comprises 168 residues: SPbeta prophage-derived uncharacterized protein YomW (168 aa).

The polypeptide is SPbeta prophage-derived uncharacterized protein YomW (yomW) (Bacillus subtilis (strain 168)).